Here is a 148-residue protein sequence, read N- to C-terminus: UPF0260 protein mll2411 (148 aa).

Belongs to the UPF0260 family.

The chain is UPF0260 protein mll2411 from Mesorhizobium japonicum (strain LMG 29417 / CECT 9101 / MAFF 303099) (Mesorhizobium loti (strain MAFF 303099)).